A 159-amino-acid chain; its full sequence is Large ribosomal subunit protein uL10 (159 aa).

Belongs to the universal ribosomal protein uL10 family. In terms of assembly, part of the ribosomal stalk of the 50S ribosomal subunit. The N-terminus interacts with L11 and the large rRNA to form the base of the stalk. The C-terminus forms an elongated spine to which L12 dimers bind in a sequential fashion forming a multimeric L10(L12)X complex.

In terms of biological role, forms part of the ribosomal stalk, playing a central role in the interaction of the ribosome with GTP-bound translation factors. This is Large ribosomal subunit protein uL10 from Campylobacter jejuni (strain RM1221).